A 98-amino-acid chain; its full sequence is NADH-ubiquinone oxidoreductase chain 4L (98 aa).

The next 3 helical transmembrane spans lie at 1–21 (MTPV…GLAF), 29–49 (ALLC…LWAL), and 58–78 (VAPM…LALL).

Belongs to the complex I subunit 4L family.

The protein resides in the mitochondrion membrane. The enzyme catalyses a ubiquinone + NADH + 5 H(+)(in) = a ubiquinol + NAD(+) + 4 H(+)(out). In terms of biological role, core subunit of the mitochondrial membrane respiratory chain NADH dehydrogenase (Complex I) which catalyzes electron transfer from NADH through the respiratory chain, using ubiquinone as an electron acceptor. Part of the enzyme membrane arm which is embedded in the lipid bilayer and involved in proton translocation. This is NADH-ubiquinone oxidoreductase chain 4L (MT-ND4L) from Oncorhynchus clarkii (Cutthroat trout).